Consider the following 710-residue polypeptide: Dihydroxyacetone synthase (710 aa).

Thiamine diphosphate-binding positions include His-78 and 128 to 130; that span reads GPL. Mg(2+) is bound by residues Asp-169, Asn-199, and Val-201. Asn-199 serves as a coordination point for thiamine diphosphate. Thiamine diphosphate contacts are provided by His-275, Glu-433, and Phe-461. Residue Glu-433 is the Proton donor of the active site. The short motif at 708–710 is the Microbody targeting signal element; sequence NKL.

The protein belongs to the transketolase family. Requires Mg(2+) as cofactor. Ca(2+) is required as a cofactor. It depends on Mn(2+) as a cofactor. The cofactor is Co(2+). Thiamine diphosphate serves as cofactor.

It is found in the peroxisome. It carries out the reaction D-xylulose 5-phosphate + formaldehyde = dihydroxyacetone + D-glyceraldehyde 3-phosphate. Functionally, this is the major methanol assimilatory enzyme from the methylotrophic Hansenula polymorpha. This Pichia angusta (Yeast) protein is Dihydroxyacetone synthase (DAS).